The primary structure comprises 156 residues: MNATRKQRLCLVIGVLAAAALAVTLIVFALQRNMSYLFTPSQVRAGAAAGYQQFRLGGMVKAGSIQRAADSLKVSFTVIDKNAATPVEYTGILPDLFRDNQSVIANGRMQGGRFVANEVLAKHDETYMPKELKDAMAEGHLGKPIPATAAPLTTPR.

At Met1–Arg8 the chain is on the cytoplasmic side. Residues Leu9–Ala29 form a helical; Signal-anchor for type II membrane protein membrane-spanning segment. The Periplasmic segment spans residues Leu30–Arg156. The heme site is built by His123 and Tyr127.

It belongs to the CcmE/CycJ family.

Its subcellular location is the cell inner membrane. Heme chaperone required for the biogenesis of c-type cytochromes. Transiently binds heme delivered by CcmC and transfers the heme to apo-cytochromes in a process facilitated by CcmF and CcmH. This Xanthomonas oryzae pv. oryzae (strain MAFF 311018) protein is Cytochrome c-type biogenesis protein CcmE 1.